Here is a 545-residue protein sequence, read N- to C-terminus: Glucose-6-phosphate isomerase (545 aa).

Catalysis depends on Glu351, which acts as the Proton donor. Active-site residues include His382 and Lys510.

It belongs to the GPI family.

The protein resides in the cytoplasm. The enzyme catalyses alpha-D-glucose 6-phosphate = beta-D-fructose 6-phosphate. It functions in the pathway carbohydrate biosynthesis; gluconeogenesis. The protein operates within carbohydrate degradation; glycolysis; D-glyceraldehyde 3-phosphate and glycerone phosphate from D-glucose: step 2/4. Its function is as follows. Catalyzes the reversible isomerization of glucose-6-phosphate to fructose-6-phosphate. This Shewanella woodyi (strain ATCC 51908 / MS32) protein is Glucose-6-phosphate isomerase.